We begin with the raw amino-acid sequence, 218 residues long: GEM-like protein 6 (218 aa).

The region spanning 96 to 174 (KIYKRLFKVC…CKINGVNQSQ (79 aa)) is the GRAM domain.

This sequence belongs to the GEM family.

The sequence is that of GEM-like protein 6 from Arabidopsis thaliana (Mouse-ear cress).